We begin with the raw amino-acid sequence, 358 residues long: Peptide chain release factor 1 (358 aa).

Residue Gln-233 is modified to N5-methylglutamine.

This sequence belongs to the prokaryotic/mitochondrial release factor family. In terms of processing, methylated by PrmC. Methylation increases the termination efficiency of RF1.

The protein resides in the cytoplasm. In terms of biological role, peptide chain release factor 1 directs the termination of translation in response to the peptide chain termination codons UAG and UAA. This Lysinibacillus sphaericus (strain C3-41) protein is Peptide chain release factor 1.